Reading from the N-terminus, the 730-residue chain is Cyclin-dependent kinase 12 (730 aa).

2 disordered regions span residues 1-230 and 246-283; these read MEIS…APFS and FSLS…IATR. Residues 9–21 show a composition bias toward basic and acidic residues; sequence THERDRKGSYGHR. Residues 57–67 are compositionally biased toward polar residues; it reads SISPQYKQRNW. Residues 75-94 are compositionally biased toward basic and acidic residues; the sequence is GRDRGRNDFSYRKKGKDYNK. Composition is skewed to basic residues over residues 95–122 and 151–163; these read RRDK…KRRN and KSKK…RKHS. Over residues 194-203 the composition is skewed to low complexity; the sequence is FNINPFQPMF. Residues 204 to 230 are compositionally biased toward pro residues; sequence SQPPPPPLPPNSQFMTPPPRPPPAPFS. One can recognise a Protein kinase domain in the interval 313-605; the sequence is MLDQIGEGTY…AKEALNHPWI (293 aa). ATP-binding positions include 317-325, Lys340, and 398-403; these read IGEGTYGQV and EYVDHD. The active-site Proton acceptor is Asp444. A disordered region spans residues 623–730; the sequence is DCHEMWSKKQ…QSQYQSVFFK (108 aa). His625 lines the ATP pocket. Residues 676-688 are compositionally biased toward basic residues; sequence NHHHHHHHSHHHA. Over residues 714 to 730 the composition is skewed to polar residues; sequence NNHQPVPQSQYQSVFFK.

The protein belongs to the protein kinase superfamily. CMGC Ser/Thr protein kinase family. CDC2/CDKX subfamily.

It localises to the nucleus. The enzyme catalyses [DNA-directed RNA polymerase] + ATP = phospho-[DNA-directed RNA polymerase] + ADP + H(+). The catalysed reaction is L-seryl-[protein] + ATP = O-phospho-L-seryl-[protein] + ADP + H(+). It catalyses the reaction L-threonyl-[protein] + ATP = O-phospho-L-threonyl-[protein] + ADP + H(+). Functionally, cyclin-dependent kinase which displays CTD kinase activity: hyperphosphorylates 'Ser-2' in the C-terminal heptapeptide repeat domain (CTD) of the largest RNA polymerase II subunit, thereby acting as a key regulator of transcription elongation. Required for normal reproduction. The polypeptide is Cyclin-dependent kinase 12 (Caenorhabditis elegans).